We begin with the raw amino-acid sequence, 93 residues long: Putative pterin-4-alpha-carbinolamine dehydratase (93 aa).

This sequence belongs to the pterin-4-alpha-carbinolamine dehydratase family.

The enzyme catalyses (4aS,6R)-4a-hydroxy-L-erythro-5,6,7,8-tetrahydrobiopterin = (6R)-L-erythro-6,7-dihydrobiopterin + H2O. This chain is Putative pterin-4-alpha-carbinolamine dehydratase, found in Roseiflexus sp. (strain RS-1).